The following is a 427-amino-acid chain: Gamma-glutamyl phosphate reductase (427 aa).

The protein belongs to the gamma-glutamyl phosphate reductase family.

It localises to the cytoplasm. The enzyme catalyses L-glutamate 5-semialdehyde + phosphate + NADP(+) = L-glutamyl 5-phosphate + NADPH + H(+). It functions in the pathway amino-acid biosynthesis; L-proline biosynthesis; L-glutamate 5-semialdehyde from L-glutamate: step 2/2. In terms of biological role, catalyzes the NADPH-dependent reduction of L-glutamate 5-phosphate into L-glutamate 5-semialdehyde and phosphate. The product spontaneously undergoes cyclization to form 1-pyrroline-5-carboxylate. The chain is Gamma-glutamyl phosphate reductase from Rhodospirillum rubrum (strain ATCC 11170 / ATH 1.1.1 / DSM 467 / LMG 4362 / NCIMB 8255 / S1).